The primary structure comprises 245 residues: 1-(5-phosphoribosyl)-5-[(5-phosphoribosylamino)methylideneamino] imidazole-4-carboxamide isomerase (245 aa).

Aspartate 7 (proton acceptor) is an active-site residue. The active-site Proton donor is aspartate 129.

It belongs to the HisA/HisF family.

Its subcellular location is the cytoplasm. It catalyses the reaction 1-(5-phospho-beta-D-ribosyl)-5-[(5-phospho-beta-D-ribosylamino)methylideneamino]imidazole-4-carboxamide = 5-[(5-phospho-1-deoxy-D-ribulos-1-ylimino)methylamino]-1-(5-phospho-beta-D-ribosyl)imidazole-4-carboxamide. The protein operates within amino-acid biosynthesis; L-histidine biosynthesis; L-histidine from 5-phospho-alpha-D-ribose 1-diphosphate: step 4/9. The sequence is that of 1-(5-phosphoribosyl)-5-[(5-phosphoribosylamino)methylideneamino] imidazole-4-carboxamide isomerase from Pectobacterium carotovorum subsp. carotovorum (strain PC1).